The following is a 630-amino-acid chain: DNA mismatch repair protein MutL (630 aa).

It belongs to the DNA mismatch repair MutL/HexB family.

This protein is involved in the repair of mismatches in DNA. It is required for dam-dependent methyl-directed DNA mismatch repair. May act as a 'molecular matchmaker', a protein that promotes the formation of a stable complex between two or more DNA-binding proteins in an ATP-dependent manner without itself being part of a final effector complex. This is DNA mismatch repair protein MutL from Lactobacillus johnsonii (strain CNCM I-12250 / La1 / NCC 533).